The chain runs to 365 residues: Chorismate synthase (365 aa).

NADP(+) contacts are provided by arginine 48 and arginine 54. FMN contacts are provided by residues 131-133 (RSS), 243-244 (NA), glycine 288, 303-307 (KPTSS), and arginine 329.

This sequence belongs to the chorismate synthase family. Homotetramer. The cofactor is FMNH2.

The enzyme catalyses 5-O-(1-carboxyvinyl)-3-phosphoshikimate = chorismate + phosphate. It participates in metabolic intermediate biosynthesis; chorismate biosynthesis; chorismate from D-erythrose 4-phosphate and phosphoenolpyruvate: step 7/7. In terms of biological role, catalyzes the anti-1,4-elimination of the C-3 phosphate and the C-6 proR hydrogen from 5-enolpyruvylshikimate-3-phosphate (EPSP) to yield chorismate, which is the branch point compound that serves as the starting substrate for the three terminal pathways of aromatic amino acid biosynthesis. This reaction introduces a second double bond into the aromatic ring system. The protein is Chorismate synthase of Rhizobium leguminosarum bv. trifolii (strain WSM2304).